The primary structure comprises 500 residues: Cytochrome P450 11B2, mitochondrial (500 aa).

Residues M1 to L24 constitute a mitochondrion transit peptide. F381 contributes to the 21-hydroxyprogesterone binding site. C447 contacts heme.

Belongs to the cytochrome P450 family. Heme is required as a cofactor. In terms of tissue distribution, adrenal gland.

Its subcellular location is the mitochondrion inner membrane. The catalysed reaction is a steroid + 2 reduced [adrenodoxin] + O2 + 2 H(+) = an 11beta-hydroxysteroid + 2 oxidized [adrenodoxin] + H2O. It catalyses the reaction 21-hydroxyprogesterone + 2 reduced [adrenodoxin] + O2 + 2 H(+) = corticosterone + 2 oxidized [adrenodoxin] + H2O. The enzyme catalyses corticosterone + 2 reduced [adrenodoxin] + O2 + 2 H(+) = 18-hydroxycorticosterone + 2 oxidized [adrenodoxin] + H2O. It carries out the reaction 18-hydroxycorticosterone + 2 reduced [adrenodoxin] + O2 + 2 H(+) = aldosterone + 2 oxidized [adrenodoxin] + 2 H2O. The catalysed reaction is 11-deoxycortisol + 2 reduced [adrenodoxin] + O2 + 2 H(+) = cortisol + 2 oxidized [adrenodoxin] + H2O. It catalyses the reaction 21-hydroxyprogesterone + 2 reduced [adrenodoxin] + O2 + 2 H(+) = 18-hydroxy-11-deoxycorticosterone + 2 oxidized [adrenodoxin] + H2O. The enzyme catalyses cortisol + 2 reduced [adrenodoxin] + O2 + 2 H(+) = 18-hydroxycortisol + 2 oxidized [adrenodoxin] + H2O. It carries out the reaction 18-hydroxycortisol + 2 reduced [adrenodoxin] + O2 + 2 H(+) = 18-oxocortisol + 2 oxidized [adrenodoxin] + 2 H2O. It functions in the pathway steroid biosynthesis. Its function is as follows. A cytochrome P450 monooxygenase that catalyzes the biosynthesis of aldosterone, the main mineralocorticoid in the human body responsible for salt and water homeostasis, thus involved in blood pressure regulation, arterial hypertension, and the development of heart failure. Catalyzes three sequential oxidative reactions of 11-deoxycorticosterone (21-hydroxyprogesterone), namely 11-beta hydroxylation, followed by two successive oxidations at C18 yielding 18-hydroxy and then 18-oxo intermediates (that would not leave the enzyme active site during the consecutive hydroxylation reactions), ending with the formation of aldosterone. Can also produce 18-hydroxycortisol and 18-oxocortisol, derived from successive oxidations of cortisol at C18, normally found at very low levels, but significantly increased in primary aldosteronism, the most common form of secondary hypertension. Mechanistically, uses molecular oxygen inserting one oxygen atom into a substrate and reducing the second into a water molecule. Two electrons are provided by NADPH via a two-protein mitochondrial transfer system comprising flavoprotein FDXR (adrenodoxin/ferredoxin reductase) and nonheme iron-sulfur protein FDX1 or FDX2 (adrenodoxin/ferredoxin). Could also be involved in the androgen metabolic pathway. The sequence is that of Cytochrome P450 11B2, mitochondrial (CYP11B2) from Mesocricetus auratus (Golden hamster).